A 434-amino-acid polypeptide reads, in one-letter code: Trigger factor (434 aa).

A PPIase FKBP-type domain is found at Gly160–Pro245.

Belongs to the FKBP-type PPIase family. Tig subfamily.

It is found in the cytoplasm. It catalyses the reaction [protein]-peptidylproline (omega=180) = [protein]-peptidylproline (omega=0). In terms of biological role, involved in protein export. Acts as a chaperone by maintaining the newly synthesized protein in an open conformation. Functions as a peptidyl-prolyl cis-trans isomerase. The sequence is that of Trigger factor from Shewanella woodyi (strain ATCC 51908 / MS32).